Consider the following 784-residue polypeptide: LPS-assembly protein LptD (784 aa).

The first 24 residues, 1 to 24 (MKKRIPTLLATMIATALYSQQGLA), serve as a signal peptide directing secretion. Intrachain disulfides connect Cys31–Cys724 and Cys173–Cys725.

This sequence belongs to the LptD family. As to quaternary structure, component of the lipopolysaccharide transport and assembly complex. Interacts with LptE and LptA. Contains two intramolecular disulfide bonds.

The protein localises to the cell outer membrane. Its function is as follows. Together with LptE, is involved in the assembly of lipopolysaccharide (LPS) at the surface of the outer membrane. The sequence is that of LPS-assembly protein LptD from Shigella flexneri.